We begin with the raw amino-acid sequence, 488 residues long: Ribulose bisphosphate carboxylase large chain 1 (488 aa).

Substrate is bound by residues Asn128 and Thr178. Lys180 (proton acceptor) is an active-site residue. Lys182 is a binding site for substrate. Lys206, Asp208, and Glu209 together coordinate Mg(2+). Lys206 carries the post-translational modification N6-carboxylysine. His298 functions as the Proton acceptor in the catalytic mechanism. Substrate is bound by residues Arg299, His331, and Ser383.

This sequence belongs to the RuBisCO large chain family. Type I subfamily. In terms of assembly, heterohexadecamer of 8 large chains and 8 small chains. It depends on Mg(2+) as a cofactor.

It carries out the reaction 2 (2R)-3-phosphoglycerate + 2 H(+) = D-ribulose 1,5-bisphosphate + CO2 + H2O. The enzyme catalyses D-ribulose 1,5-bisphosphate + O2 = 2-phosphoglycolate + (2R)-3-phosphoglycerate + 2 H(+). Its function is as follows. RuBisCO catalyzes two reactions: the carboxylation of D-ribulose 1,5-bisphosphate, the primary event in carbon dioxide fixation, as well as the oxidative fragmentation of the pentose substrate. Both reactions occur simultaneously and in competition at the same active site. In Methylibium petroleiphilum (strain ATCC BAA-1232 / LMG 22953 / PM1), this protein is Ribulose bisphosphate carboxylase large chain 1.